The chain runs to 701 residues: Elongation factor G 1 (701 aa).

In terms of domain architecture, tr-type G spans lysine 13–leucine 288. GTP-binding positions include alanine 22–threonine 29, aspartate 86–histidine 90, and asparagine 140–aspartate 143.

The protein belongs to the TRAFAC class translation factor GTPase superfamily. Classic translation factor GTPase family. EF-G/EF-2 subfamily.

The protein resides in the cytoplasm. Catalyzes the GTP-dependent ribosomal translocation step during translation elongation. During this step, the ribosome changes from the pre-translocational (PRE) to the post-translocational (POST) state as the newly formed A-site-bound peptidyl-tRNA and P-site-bound deacylated tRNA move to the P and E sites, respectively. Catalyzes the coordinated movement of the two tRNA molecules, the mRNA and conformational changes in the ribosome. This chain is Elongation factor G 1, found in Bdellovibrio bacteriovorus (strain ATCC 15356 / DSM 50701 / NCIMB 9529 / HD100).